Consider the following 573-residue polypeptide: Dilute domain-containing protein SPAC25B8.08 (573 aa).

Residues 180-464 form the Dilute domain; it reads NAFLCEVNQV…LKKLDAFHEE (285 aa).

It localises to the cytoplasm. The protein resides in the golgi apparatus. The chain is Dilute domain-containing protein SPAC25B8.08 from Schizosaccharomyces pombe (strain 972 / ATCC 24843) (Fission yeast).